Consider the following 206-residue polypeptide: Ras-related protein Rab7 (206 aa).

Residues 15–22 (GDSGVGKT), 63–67 (DTAGQ), and 125–128 (NKID) each bind GTP. S-geranylgeranyl cysteine attachment occurs at residues Cys-204 and Cys-206. Cys-206 bears the Cysteine methyl ester mark.

Belongs to the small GTPase superfamily. Rab family.

The protein localises to the cell membrane. In terms of biological role, protein transport. Probably involved in vesicular traffic. This chain is Ras-related protein Rab7, found in Pisum sativum (Garden pea).